The primary structure comprises 603 residues: DNA mismatch repair protein MutL (603 aa).

The protein belongs to the DNA mismatch repair MutL/HexB family.

Functionally, this protein is involved in the repair of mismatches in DNA. It is required for dam-dependent methyl-directed DNA mismatch repair. May act as a 'molecular matchmaker', a protein that promotes the formation of a stable complex between two or more DNA-binding proteins in an ATP-dependent manner without itself being part of a final effector complex. The sequence is that of DNA mismatch repair protein MutL from Rhodopseudomonas palustris (strain BisA53).